The chain runs to 325 residues: Tagatose 1,6-diphosphate aldolase (325 aa).

It belongs to the aldolase LacD family.

It carries out the reaction D-tagatofuranose 1,6-bisphosphate = D-glyceraldehyde 3-phosphate + dihydroxyacetone phosphate. Its pathway is carbohydrate metabolism; D-tagatose 6-phosphate degradation; D-glyceraldehyde 3-phosphate and glycerone phosphate from D-tagatose 6-phosphate: step 2/2. This Staphylococcus haemolyticus (strain JCSC1435) protein is Tagatose 1,6-diphosphate aldolase.